Reading from the N-terminus, the 756-residue chain is Catalase-peroxidase (756 aa).

The signal sequence occupies residues 1 to 26; sequence MKGKTVNKQTLAALVSALLVFNPAVA. Positions 126 to 248 form a cross-link, tryptophyl-tyrosyl-methioninium (Trp-Tyr) (with M-274); the sequence is WHSAGTYRTL…LGATHMGLIY (123 aa). Residue His-127 is the Proton acceptor of the active site. A cross-link (tryptophyl-tyrosyl-methioninium (Tyr-Met) (with W-126)) is located at residues 248–274; sequence YVNPEGPKGVPDPLGSAKNIRTAFSRM. His-289 contacts heme b.

It belongs to the peroxidase family. Peroxidase/catalase subfamily. Homodimer or homotetramer. Heme b serves as cofactor. In terms of processing, formation of the three residue Trp-Tyr-Met cross-link is important for the catalase, but not the peroxidase activity of the enzyme.

It carries out the reaction H2O2 + AH2 = A + 2 H2O. It catalyses the reaction 2 H2O2 = O2 + 2 H2O. In terms of biological role, bifunctional enzyme with both catalase and broad-spectrum peroxidase activity. The sequence is that of Catalase-peroxidase from Shewanella loihica (strain ATCC BAA-1088 / PV-4).